The following is a 102-amino-acid chain: Iron-sulfur cluster assembly protein CyaY (102 aa).

This sequence belongs to the frataxin family.

In terms of biological role, involved in iron-sulfur (Fe-S) cluster assembly. May act as a regulator of Fe-S biogenesis. This Histophilus somni (strain 2336) (Haemophilus somnus) protein is Iron-sulfur cluster assembly protein CyaY.